The primary structure comprises 65 residues: Large ribosomal subunit protein bL32 (65 aa).

The protein belongs to the bacterial ribosomal protein bL32 family.

The chain is Large ribosomal subunit protein bL32 from Metamycoplasma arthritidis (strain 158L3-1) (Mycoplasma arthritidis).